A 341-amino-acid polypeptide reads, in one-letter code: Anthranilate phosphoribosyltransferase (341 aa).

5-phospho-alpha-D-ribose 1-diphosphate contacts are provided by residues glycine 84, 87 to 88, threonine 92, 94 to 97, 112 to 120, and serine 124; these read GD, NIST, and KHGNRSVSS. Glycine 84 contributes to the anthranilate binding site. Serine 96 provides a ligand contact to Mg(2+). Position 115 (asparagine 115) interacts with anthranilate. Arginine 170 lines the anthranilate pocket. Positions 229 and 230 each coordinate Mg(2+).

Belongs to the anthranilate phosphoribosyltransferase family. In terms of assembly, homodimer. Mg(2+) is required as a cofactor.

It carries out the reaction N-(5-phospho-beta-D-ribosyl)anthranilate + diphosphate = 5-phospho-alpha-D-ribose 1-diphosphate + anthranilate. It functions in the pathway amino-acid biosynthesis; L-tryptophan biosynthesis; L-tryptophan from chorismate: step 2/5. Catalyzes the transfer of the phosphoribosyl group of 5-phosphorylribose-1-pyrophosphate (PRPP) to anthranilate to yield N-(5'-phosphoribosyl)-anthranilate (PRA). The sequence is that of Anthranilate phosphoribosyltransferase from Polynucleobacter asymbioticus (strain DSM 18221 / CIP 109841 / QLW-P1DMWA-1) (Polynucleobacter necessarius subsp. asymbioticus).